Consider the following 342-residue polypeptide: Biotin synthase (342 aa).

Positions 38 to 262 constitute a Radical SAM core domain; sequence GQVQISTLLS…MMPTSYVRLS (225 aa). [4Fe-4S] cluster-binding residues include Cys53, Cys57, and Cys60. 4 residues coordinate [2Fe-2S] cluster: Cys97, Cys128, Cys188, and Arg260.

It belongs to the radical SAM superfamily. Biotin synthase family. Homodimer. Requires [4Fe-4S] cluster as cofactor. [2Fe-2S] cluster serves as cofactor.

It catalyses the reaction (4R,5S)-dethiobiotin + (sulfur carrier)-SH + 2 reduced [2Fe-2S]-[ferredoxin] + 2 S-adenosyl-L-methionine = (sulfur carrier)-H + biotin + 2 5'-deoxyadenosine + 2 L-methionine + 2 oxidized [2Fe-2S]-[ferredoxin]. It functions in the pathway cofactor biosynthesis; biotin biosynthesis; biotin from 7,8-diaminononanoate: step 2/2. In terms of biological role, catalyzes the conversion of dethiobiotin (DTB) to biotin by the insertion of a sulfur atom into dethiobiotin via a radical-based mechanism. The polypeptide is Biotin synthase (Baumannia cicadellinicola subsp. Homalodisca coagulata).